A 632-amino-acid chain; its full sequence is X-ray repair cross-complementing protein 5 (632 aa).

The Schiff-base intermediate with DNA; for 5'-deoxyribose-5-phosphate lyase activity role is filled by arginine 52. Residues 283–490 (LYLNKDLSFS…VDKMKGIIQK (208 aa)) form the Ku domain. The tract at residues 555-578 (DYSPEGKAAKRKQAGDAQAEKRPK) is disordered. Residues 595–629 (LGKLTVSALKDTCRHYGLRSGGKKQELIDALTEYF) form the SAP domain.

It belongs to the ku70 family. In terms of assembly, heterodimer composed of XRCC5/Ku80 and XRCC6/Ku70. Component of the core long-range non-homologous end joining (NHEJ) complex (also named DNA-PK complex) composed of PRKDC, LIG4, XRCC4, XRCC6/Ku70, XRCC5/Ku86 and NHEJ1/XLF. Additional component of the NHEJ complex includes PAXX. Following autophosphorylation, PRKDC dissociates from DNA, leading to formation of the short-range NHEJ complex, composed of LIG4, XRCC4, XRCC6/Ku70, XRCC5/Ku86 and NHEJ1/XLF. In terms of processing, phosphorylated on serine residues.

It is found in the nucleus. The protein resides in the chromosome. Functionally, single-stranded DNA-dependent ATP-dependent helicase that plays a key role in DNA non-homologous end joining (NHEJ) by recruiting DNA-PK to DNA. Required for double-strand break repair and V(D)J recombination. Also has a role in chromosome translocation. Has a role in chromosome translocation. The DNA helicase II complex binds preferentially to fork-like ends of double-stranded DNA in a cell cycle-dependent manner. It works in the 3'-5' direction. During NHEJ, the XRCC5-XRRC6 dimer performs the recognition step: it recognizes and binds to the broken ends of the DNA and protects them from further resection. Binding to DNA may be mediated by XRCC6. The XRCC5-XRRC6 dimer acts as a regulatory subunit of the DNA-dependent protein kinase complex DNA-PK by increasing the affinity of the catalytic subunit PRKDC to DNA by 100-fold. The XRCC5-XRRC6 dimer is probably involved in stabilizing broken DNA ends and bringing them together. The assembly of the DNA-PK complex to DNA ends is required for the NHEJ ligation step. Probably also acts as a 5'-deoxyribose-5-phosphate lyase (5'-dRP lyase), by catalyzing the beta-elimination of the 5' deoxyribose-5-phosphate at an abasic site near double-strand breaks. 5'-dRP lyase activity allows to 'clean' the termini of abasic sites, a class of nucleotide damage commonly associated with strand breaks, before such broken ends can be joined. The XRCC5-XRRC6 dimer together with APEX1 acts as a negative regulator of transcription. In Gallus gallus (Chicken), this protein is X-ray repair cross-complementing protein 5 (XRCC6).